The primary structure comprises 75 residues: UPF0154 protein MYPU_1460 (75 aa).

Residues 8–28 (GLIVGLSILFFIIGGVVAFFV) traverse the membrane as a helical segment.

It belongs to the UPF0154 family.

The protein resides in the membrane. The polypeptide is UPF0154 protein MYPU_1460 (Mycoplasmopsis pulmonis (strain UAB CTIP) (Mycoplasma pulmonis)).